A 137-amino-acid chain; its full sequence is Large ribosomal subunit protein uL16 (137 aa).

The protein belongs to the universal ribosomal protein uL16 family. Part of the 50S ribosomal subunit.

Functionally, binds 23S rRNA and is also seen to make contacts with the A and possibly P site tRNAs. This chain is Large ribosomal subunit protein uL16, found in Rhodopseudomonas palustris (strain HaA2).